The chain runs to 270 residues: Sulfur carrier protein FdhD (270 aa).

The Cysteine persulfide intermediate role is filled by Cys116. A Mo-bis(molybdopterin guanine dinucleotide)-binding site is contributed by 253–258 (FAREGK).

This sequence belongs to the FdhD family.

It is found in the cytoplasm. Its function is as follows. Required for formate dehydrogenase (FDH) activity. Acts as a sulfur carrier protein that transfers sulfur from IscS to the molybdenum cofactor prior to its insertion into FDH. The chain is Sulfur carrier protein FdhD from Haemophilus influenzae (strain ATCC 51907 / DSM 11121 / KW20 / Rd).